A 1108-amino-acid polypeptide reads, in one-letter code: AP-3 complex subunit beta (1108 aa).

HEAT repeat units lie at residues Asp90 to Ile127, Ile327 to Ser363, Glu397 to Pro433, and Asp434 to Thr471. A compositionally biased stretch (basic and acidic residues) spans Lys480–Glu490. Disordered regions lie at residues Lys480–Ser501, Asp736–Glu797, and Leu811–Glu835. 2 stretches are compositionally biased toward acidic residues: residues Asp736–Phe764 and Tyr780–Glu797.

It belongs to the adaptor complexes large subunit family. In terms of assembly, adaptor protein complex 3 (AP-3) is a heterotetramer composed of two large adaptins (delta-type subunit and beta-type subunit), a medium adaptin (mu-type subunit) and a small adaptin (sigma-type subunit).

The protein resides in the endosome membrane. Part of the AP-3 complex, an adaptor-related complex which is essential for the compartmentalization of the endocytic pathway. The chain is AP-3 complex subunit beta (ap3b-1) from Dictyostelium discoideum (Social amoeba).